The sequence spans 182 residues: N-alpha-acetyltransferase daf-31 (182 aa).

In terms of domain architecture, N-acetyltransferase spans 1–152 (MNIRCARVDD…DAYAMRRDLA (152 aa)). Positions 162 to 182 (PADREAYTTAKTTDDKKKNRS) are disordered.

It belongs to the acetyltransferase family. ARD1 subfamily. As to quaternary structure, component of the N-terminal acetyltransferase A (NatA) complex. In terms of tissue distribution, expressed in head and tail hypodermal cells, hypodermal seam cells, pharynx, intestine and head and tail neurons.

It carries out the reaction N-terminal glycyl-[protein] + acetyl-CoA = N-terminal N(alpha)-acetylglycyl-[protein] + CoA + H(+). The catalysed reaction is N-terminal L-alanyl-[protein] + acetyl-CoA = N-terminal N(alpha)-acetyl-L-alanyl-[protein] + CoA + H(+). It catalyses the reaction N-terminal L-seryl-[protein] + acetyl-CoA = N-terminal N(alpha)-acetyl-L-seryl-[protein] + CoA + H(+). The enzyme catalyses N-terminal L-valyl-[protein] + acetyl-CoA = N-terminal N(alpha)-acetyl-L-valyl-[protein] + CoA + H(+). It carries out the reaction N-terminal L-cysteinyl-[protein] + acetyl-CoA = N-terminal N(alpha)-acetyl-L-cysteinyl-[protein] + CoA + H(+). The catalysed reaction is N-terminal L-threonyl-[protein] + acetyl-CoA = N-terminal N(alpha)-acetyl-L-threonyl-[protein] + CoA + H(+). Its function is as follows. Catalytic subunit of the N-terminal acetyltransferase A (NatA) complex which displays alpha (N-terminal) acetyltransferase activity. Plays a role in regulating larval development, metabolism and longevity. Functions downstream or alongside daf-3, daf-12 and daf-16 in the dauer formation pathway. Functions upstream of daf-15 to enable animal development. This Caenorhabditis elegans protein is N-alpha-acetyltransferase daf-31.